We begin with the raw amino-acid sequence, 279 residues long: Lacto-N-neotetraose biosynthesis glycosyltransferase LgtB (279 aa).

This sequence belongs to the glycosyltransferase 25 family.

The protein operates within glycan metabolism; lacto-N-neotetraose biosynthesis. It functions in the pathway bacterial outer membrane biogenesis; lipooligosaccharide biosynthesis. Adds the second galactose to the lacto-N-tetraose chain in lipooligosaccharide (LOS). This Neisseria meningitidis serogroup A / serotype 4A (strain DSM 15465 / Z2491) protein is Lacto-N-neotetraose biosynthesis glycosyltransferase LgtB (lgtB).